Reading from the N-terminus, the 609-residue chain is Adenine deaminase (609 aa).

The protein belongs to the metallo-dependent hydrolases superfamily. Adenine deaminase family. Mn(2+) serves as cofactor.

The enzyme catalyses adenine + H2O + H(+) = hypoxanthine + NH4(+). This is Adenine deaminase from Cenarchaeum symbiosum (strain A).